The primary structure comprises 156 residues: Ribosomal RNA large subunit methyltransferase H (156 aa).

Residues L73, G104, and 123-128 (LSPLTL) each bind S-adenosyl-L-methionine.

It belongs to the RNA methyltransferase RlmH family. Homodimer.

Its subcellular location is the cytoplasm. The enzyme catalyses pseudouridine(1915) in 23S rRNA + S-adenosyl-L-methionine = N(3)-methylpseudouridine(1915) in 23S rRNA + S-adenosyl-L-homocysteine + H(+). Specifically methylates the pseudouridine at position 1915 (m3Psi1915) in 23S rRNA. The sequence is that of Ribosomal RNA large subunit methyltransferase H from Aliivibrio fischeri (strain MJ11) (Vibrio fischeri).